A 176-amino-acid polypeptide reads, in one-letter code: Ribosome rescue factor SmrB (176 aa).

The region spanning 93–168 (LDLHGYRQSE…GDAALLVLID (76 aa)) is the Smr domain.

Belongs to the SmrB family. Associates with collided ribosomes, but not with correctly translating polysomes.

Acts as a ribosome collision sensor. Detects stalled/collided disomes (pairs of ribosomes where the leading ribosome is stalled and a second ribosome has collided with it) and endonucleolytically cleaves mRNA at the 5' boundary of the stalled ribosome. Stalled/collided disomes form a new interface (primarily via the 30S subunits) that binds SmrB. Cleaved mRNA becomes available for tmRNA ligation, leading to ribosomal subunit dissociation and rescue of stalled ribosomes. The protein is Ribosome rescue factor SmrB of Shewanella baltica (strain OS223).